Consider the following 136-residue polypeptide: Phosphoribosyl-AMP cyclohydrolase (136 aa).

D89 lines the Mg(2+) pocket. C90 provides a ligand contact to Zn(2+). D91 and D93 together coordinate Mg(2+). Positions 106 and 113 each coordinate Zn(2+).

This sequence belongs to the PRA-CH family. As to quaternary structure, homodimer. Requires Mg(2+) as cofactor. Zn(2+) is required as a cofactor.

It localises to the cytoplasm. It catalyses the reaction 1-(5-phospho-beta-D-ribosyl)-5'-AMP + H2O = 1-(5-phospho-beta-D-ribosyl)-5-[(5-phospho-beta-D-ribosylamino)methylideneamino]imidazole-4-carboxamide. It functions in the pathway amino-acid biosynthesis; L-histidine biosynthesis; L-histidine from 5-phospho-alpha-D-ribose 1-diphosphate: step 3/9. Its function is as follows. Catalyzes the hydrolysis of the adenine ring of phosphoribosyl-AMP. This Bifidobacterium longum subsp. infantis (strain ATCC 15697 / DSM 20088 / JCM 1222 / NCTC 11817 / S12) protein is Phosphoribosyl-AMP cyclohydrolase.